Consider the following 248-residue polypeptide: Adenosylcobinamide-GDP ribazoletransferase (248 aa).

7 consecutive transmembrane segments (helical) span residues 24–44 (EINL…IGAW), 70–90 (IIIT…GLFS), 106–126 (VGAN…ALFL), 134–154 (IGWL…LLFA), 168–188 (IFLG…LVAL), 189–209 (GAFF…FTII), and 228–248 (AGGQ…WGLI).

This sequence belongs to the CobS family. Requires Mg(2+) as cofactor.

It localises to the cell membrane. It carries out the reaction alpha-ribazole + adenosylcob(III)inamide-GDP = adenosylcob(III)alamin + GMP + H(+). The catalysed reaction is alpha-ribazole 5'-phosphate + adenosylcob(III)inamide-GDP = adenosylcob(III)alamin 5'-phosphate + GMP + H(+). It participates in cofactor biosynthesis; adenosylcobalamin biosynthesis; adenosylcobalamin from cob(II)yrinate a,c-diamide: step 7/7. Joins adenosylcobinamide-GDP and alpha-ribazole to generate adenosylcobalamin (Ado-cobalamin). Also synthesizes adenosylcobalamin 5'-phosphate from adenosylcobinamide-GDP and alpha-ribazole 5'-phosphate. The sequence is that of Adenosylcobinamide-GDP ribazoletransferase from Listeria monocytogenes serotype 4a (strain HCC23).